The sequence spans 236 residues: Small ribosomal subunit protein uS2c (236 aa).

The protein belongs to the universal ribosomal protein uS2 family.

Its subcellular location is the plastid. It is found in the chloroplast. This Helianthus annuus (Common sunflower) protein is Small ribosomal subunit protein uS2c (rps2).